Here is a 299-residue protein sequence, read N- to C-terminus: HTH-type transcriptional regulator CynR (299 aa).

Residues 1–58 (MLSRHINYFLAVAEHGSFTRAASALHVSQPALSQQIRQLEESLGVPLFDRSGRTIRLT) enclose the HTH lysR-type domain. Residues 18–37 (FTRAASALHVSQPALSQQIR) constitute a DNA-binding region (H-T-H motif).

This sequence belongs to the LysR transcriptional regulatory family.

Its subcellular location is the cytoplasm. Functionally, positively regulates the cynTSX operon, and negatively regulates its own transcription. Binds specifically to the cynR-cynTSX intergenic region. This is HTH-type transcriptional regulator CynR (cynR) from Escherichia coli (strain K12).